The chain runs to 360 residues: Small ribosomal subunit protein mS22 (360 aa).

Ser-54 is subject to Phosphoserine. Lys-211 carries the post-translational modification N6-acetyllysine.

The protein belongs to the mitochondrion-specific ribosomal protein mS22 family. Component of the mitochondrial small ribosomal subunit (mt-SSU). Mature mammalian 55S mitochondrial ribosomes consist of a small (28S) and a large (39S) subunit. The 28S small subunit contains a 12S ribosomal RNA (12S mt-rRNA) and 30 different proteins. The 39S large subunit contains a 16S rRNA (16S mt-rRNA), a copy of mitochondrial valine transfer RNA (mt-tRNA(Val)), which plays an integral structural role, and 52 different proteins.

It localises to the mitochondrion. This Homo sapiens (Human) protein is Small ribosomal subunit protein mS22 (MRPS22).